The following is a 267-amino-acid chain: 5'-nucleotidase SurE (267 aa).

4 residues coordinate a divalent metal cation: aspartate 14, aspartate 15, serine 45, and asparagine 100.

It belongs to the SurE nucleotidase family. It depends on a divalent metal cation as a cofactor.

It is found in the cytoplasm. It carries out the reaction a ribonucleoside 5'-phosphate + H2O = a ribonucleoside + phosphate. Functionally, nucleotidase that shows phosphatase activity on nucleoside 5'-monophosphates. The protein is 5'-nucleotidase SurE of Methanosarcina barkeri (strain Fusaro / DSM 804).